The chain runs to 520 residues: Dual specificity tyrosine-phosphorylation-regulated kinase 4 (520 aa).

A disordered region spans residues 1 to 32; that stretch reads MPASELKASEIPFHPSIKTQDPKAEEKSPKKQ. The short motif at 19-37 is the Bipartite nuclear localization signal element; it reads TQDPKAEEKSPKKQKVTLT. The segment covering 20-29 has biased composition (basic and acidic residues); it reads QDPKAEEKSP. The Protein kinase domain maps to 104–400; that stretch reads YEVLETIGKG…PDQALKHAWI (297 aa). ATP is bound by residues 110–118, Lys133, and 183–186; these read IGKGSFGQV and FELL. Asp230 acts as the Proton acceptor in catalysis. Position 264 is a phosphotyrosine; by autocatalysis (Tyr264). Residues 404–467 are disordered; the sequence is RNLKPQPRPQ…KHVQHSGDQQ (64 aa). Residues 439–457 are compositionally biased toward basic and acidic residues; it reads RKADEITKETTEKTKDSPT.

This sequence belongs to the protein kinase superfamily. CMGC Ser/Thr protein kinase family. MNB/DYRK subfamily. It depends on Mg(2+) as a cofactor. Autophosphorylation on Tyr-264 in the activation loop is required for kinase activity.

Its subcellular location is the cytoplasm. It is found in the nucleus. The enzyme catalyses L-seryl-[protein] + ATP = O-phospho-L-seryl-[protein] + ADP + H(+). It carries out the reaction L-threonyl-[protein] + ATP = O-phospho-L-threonyl-[protein] + ADP + H(+). It catalyses the reaction L-tyrosyl-[protein] + ATP = O-phospho-L-tyrosyl-[protein] + ADP + H(+). In terms of biological role, possible non-essential role in spermiogenesis. The protein is Dual specificity tyrosine-phosphorylation-regulated kinase 4 (DYRK4) of Homo sapiens (Human).